A 230-amino-acid polypeptide reads, in one-letter code: Cytochrome b6-f complex iron-sulfur subunit, chloroplastic (230 aa).

The transit peptide at 1–51 (MASFTLSSATPSQLCSSKNGMFAPSLALAKAGRVNVLISKERIRGMKLTCQ) directs the protein to the chloroplast. Residues 73-93 (LLGALSLPTGYMLLPYASFFV) form a helical membrane-spanning segment. A Rieske domain is found at 116–212 (AAEWLKTHAP…CDVDDGKVVF (97 aa)). [2Fe-2S] cluster-binding residues include C158, H160, C176, and H179. The cysteines at positions 163 and 178 are disulfide-linked.

Belongs to the Rieske iron-sulfur protein family. As to quaternary structure, the 4 large subunits of the cytochrome b6-f complex are cytochrome b6, subunit IV (17 kDa polypeptide, petD), cytochrome f and the Rieske protein, while the 4 small subunits are petG, petL, petM and petN. The complex functions as a dimer. The cofactor is [2Fe-2S] cluster.

Its subcellular location is the plastid. It is found in the chloroplast thylakoid membrane. It catalyses the reaction 2 oxidized [plastocyanin] + a plastoquinol + 2 H(+)(in) = 2 reduced [plastocyanin] + a plastoquinone + 4 H(+)(out). Component of the cytochrome b6-f complex, which mediates electron transfer between photosystem II (PSII) and photosystem I (PSI), cyclic electron flow around PSI, and state transitions. The protein is Cytochrome b6-f complex iron-sulfur subunit, chloroplastic (petC) of Spinacia oleracea (Spinach).